The sequence spans 497 residues: L-arabinose isomerase (497 aa).

Residues E306, E331, H348, and H447 each coordinate Mn(2+).

Belongs to the arabinose isomerase family. Mn(2+) is required as a cofactor.

It carries out the reaction beta-L-arabinopyranose = L-ribulose. Its pathway is carbohydrate degradation; L-arabinose degradation via L-ribulose; D-xylulose 5-phosphate from L-arabinose (bacterial route): step 1/3. In terms of biological role, catalyzes the conversion of L-arabinose to L-ribulose. The chain is L-arabinose isomerase from Halalkalibacterium halodurans (strain ATCC BAA-125 / DSM 18197 / FERM 7344 / JCM 9153 / C-125) (Bacillus halodurans).